Consider the following 157-residue polypeptide: Transcriptional regulator MraZ (157 aa).

SpoVT-AbrB domains are found at residues T7 to E54 and V83 to L126.

This sequence belongs to the MraZ family. In terms of assembly, forms oligomers.

The protein resides in the cytoplasm. The protein localises to the nucleoid. This is Transcriptional regulator MraZ from Flavobacterium psychrophilum (strain ATCC 49511 / DSM 21280 / CIP 103535 / JIP02/86).